The sequence spans 632 residues: Lipoma-preferred partner homolog (632 aa).

2 disordered regions span residues 1-118 and 135-249; these read MSHP…RSSL and SSPY…RSYN. Residues 26-40 are compositionally biased toward polar residues; sequence THSFGTPSISVSTQQ. The span at 41-53 shows a compositional bias: low complexity; the sequence is PPKKFAPVVAPKP. Lysine 109 bears the N6-acetyllysine mark. Residues serine 117 and serine 152 each carry the phosphoserine modification. Positions 144-160 are enriched in low complexity; it reads PGSSSSIASPPVSTPVT. Polar residues-rich tracts occupy residues 172 to 182 and 206 to 239; these read PLTATKKSATK and SYST…SSGQ. The residue at position 241 (tyrosine 241) is a Phosphotyrosine. An Omega-N-methylarginine modification is found at arginine 246. Lysine 324 is covalently cross-linked (Glycyl lysine isopeptide (Lys-Gly) (interchain with G-Cter in SUMO1)). LIM zinc-binding domains lie at 434-493, 494-554, and 555-623; these read GRCA…INTL, EQCS…KFAP, and RCSV…RIRV.

This sequence belongs to the zyxin/ajuba family. As to quaternary structure, interacts with PDZ domains of SCRIB, with VASP and with ACTN1/alpha-actinin.

The protein resides in the nucleus. Its subcellular location is the cytoplasm. The protein localises to the cell junction. Functionally, may play a structural role at sites of cell adhesion in maintaining cell shape and motility. In addition to these structural functions, it may also be implicated in signaling events and activation of gene transcription. May be involved in signal transduction from cell adhesion sites to the nucleus allowing successful integration of signals arising from soluble factors and cell-cell adhesion. Also suggested to serve as a scaffold protein upon which distinct protein complexes are assembled in the cytoplasm and in the nucleus. This chain is Lipoma-preferred partner homolog (Lpp), found in Rattus norvegicus (Rat).